A 485-amino-acid chain; its full sequence is Glutamyl-tRNA(Gln) amidotransferase subunit A (485 aa).

Active-site charge relay system residues include Lys-79 and Ser-154. Ser-178 (acyl-ester intermediate) is an active-site residue.

The protein belongs to the amidase family. GatA subfamily. Heterotrimer of A, B and C subunits.

The catalysed reaction is L-glutamyl-tRNA(Gln) + L-glutamine + ATP + H2O = L-glutaminyl-tRNA(Gln) + L-glutamate + ADP + phosphate + H(+). Allows the formation of correctly charged Gln-tRNA(Gln) through the transamidation of misacylated Glu-tRNA(Gln) in organisms which lack glutaminyl-tRNA synthetase. The reaction takes place in the presence of glutamine and ATP through an activated gamma-phospho-Glu-tRNA(Gln). This Staphylococcus aureus protein is Glutamyl-tRNA(Gln) amidotransferase subunit A.